Reading from the N-terminus, the 176-residue chain is Ribosome rescue factor SmrB (176 aa).

The Smr domain maps to 93–168; the sequence is LDLHGYRQSE…GDAALLVLID (76 aa).

This sequence belongs to the SmrB family. Associates with collided ribosomes, but not with correctly translating polysomes.

In terms of biological role, acts as a ribosome collision sensor. Detects stalled/collided disomes (pairs of ribosomes where the leading ribosome is stalled and a second ribosome has collided with it) and endonucleolytically cleaves mRNA at the 5' boundary of the stalled ribosome. Stalled/collided disomes form a new interface (primarily via the 30S subunits) that binds SmrB. Cleaved mRNA becomes available for tmRNA ligation, leading to ribosomal subunit dissociation and rescue of stalled ribosomes. This is Ribosome rescue factor SmrB from Shewanella sp. (strain ANA-3).